We begin with the raw amino-acid sequence, 60 residues long: Large ribosomal subunit protein bL32 (60 aa).

The protein belongs to the bacterial ribosomal protein bL32 family.

The sequence is that of Large ribosomal subunit protein bL32 from Persephonella marina (strain DSM 14350 / EX-H1).